The following is a 333-amino-acid chain: Electron transfer flavoprotein subunit alpha, mitochondrial (333 aa).

The N-terminal 19 residues, methionine 1–phenylalanine 19, are a transit peptide targeting the mitochondrion. The segment at glutamine 20 to leucine 204 is domain I. Lysine 59 is modified (N6-acetyllysine; alternate). Position 59 is an N6-succinyllysine; alternate (lysine 59). At lysine 62 the chain carries N6-acetyllysine. An N6-acetyllysine; alternate modification is found at lysine 69. The residue at position 69 (lysine 69) is an N6-succinyllysine; alternate. N6-acetyllysine is present on lysine 75. At threonine 93 the chain carries Phosphothreonine. An N6-acetyllysine mark is found at lysine 101 and lysine 139. Serine 140 carries the post-translational modification Phosphoserine. Lysine 158 is modified (N6-acetyllysine; alternate). At lysine 158 the chain carries N6-succinyllysine; alternate. The residue at position 164 (lysine 164) is an N6-acetyllysine. N6-succinyllysine is present on lysine 187. The residue at position 203 (lysine 203) is an N6-acetyllysine; alternate. Lysine 203 bears the N6-succinyllysine; alternate mark. Residues threonine 205–lysine 333 form a domain II region. Lysine 216 carries the N6-succinyllysine modification. Residue arginine 223 participates in FAD binding. 2 positions are modified to N6-acetyllysine; alternate: lysine 226 and lysine 232. An N6-succinyllysine; alternate mark is found at lysine 226 and lysine 232. Residues serine 248, valine 263–threonine 266, serine 281–histidine 286, and asparagine 300 contribute to the FAD site. Lysine 301 carries the post-translational modification N6-succinyllysine. FAD is bound at residue aspartate 318–leucine 319.

It belongs to the ETF alpha-subunit/FixB family. Heterodimer composed of ETFA and ETFB. Identified in a complex that contains ETFA, ETFB and ETFRF1. Interaction with ETFRF1 promotes dissociation of the bound FAD and loss of electron transfer activity. Interacts with TASOR. Requires FAD as cofactor.

The protein resides in the mitochondrion matrix. Its function is as follows. Heterodimeric electron transfer flavoprotein that accepts electrons from several mitochondrial dehydrogenases, including acyl-CoA dehydrogenases, glutaryl-CoA and sarcosine dehydrogenase. It transfers the electrons to the main mitochondrial respiratory chain via ETF-ubiquinone oxidoreductase (ETF dehydrogenase). Required for normal mitochondrial fatty acid oxidation and normal amino acid metabolism. The protein is Electron transfer flavoprotein subunit alpha, mitochondrial (ETFA) of Macaca fascicularis (Crab-eating macaque).